The chain runs to 251 residues: Tryptophan synthase alpha chain (251 aa).

Residues glutamate 36 and aspartate 47 each act as proton acceptor in the active site.

It belongs to the TrpA family. Tetramer of two alpha and two beta chains.

The catalysed reaction is (1S,2R)-1-C-(indol-3-yl)glycerol 3-phosphate + L-serine = D-glyceraldehyde 3-phosphate + L-tryptophan + H2O. It participates in amino-acid biosynthesis; L-tryptophan biosynthesis; L-tryptophan from chorismate: step 5/5. Its function is as follows. The alpha subunit is responsible for the aldol cleavage of indoleglycerol phosphate to indole and glyceraldehyde 3-phosphate. The sequence is that of Tryptophan synthase alpha chain from Thermococcus kodakarensis (strain ATCC BAA-918 / JCM 12380 / KOD1) (Pyrococcus kodakaraensis (strain KOD1)).